A 654-amino-acid polypeptide reads, in one-letter code: Fructose-1,6-bisphosphatase class 3 (654 aa).

Positions Asn288–Glu307 are disordered. A compositionally biased stretch (basic and acidic residues) spans Asp298–Glu307.

The protein belongs to the FBPase class 3 family. It depends on Mn(2+) as a cofactor.

The enzyme catalyses beta-D-fructose 1,6-bisphosphate + H2O = beta-D-fructose 6-phosphate + phosphate. It functions in the pathway carbohydrate biosynthesis; gluconeogenesis. The protein is Fructose-1,6-bisphosphatase class 3 of Staphylococcus aureus (strain USA300).